A 168-amino-acid chain; its full sequence is GTP-dependent dephospho-CoA kinase (168 aa).

The GTP site is built by Asp49, Val50, Val51, Asp68, Lys70, and Glu120.

It belongs to the GTP-dependent DPCK family.

The enzyme catalyses 3'-dephospho-CoA + GTP = GDP + CoA + H(+). The protein operates within cofactor biosynthesis; coenzyme A biosynthesis. Catalyzes the GTP-dependent phosphorylation of the 3'-hydroxyl group of dephosphocoenzyme A to form coenzyme A (CoA). This Pyrobaculum neutrophilum (strain DSM 2338 / JCM 9278 / NBRC 100436 / V24Sta) (Thermoproteus neutrophilus) protein is GTP-dependent dephospho-CoA kinase.